The chain runs to 315 residues: Ribosomal protein L11 methyltransferase (315 aa).

The S-adenosyl-L-methionine site is built by Thr-152, Gly-185, Asp-207, and Asn-249.

Belongs to the methyltransferase superfamily. PrmA family.

It is found in the cytoplasm. The catalysed reaction is L-lysyl-[protein] + 3 S-adenosyl-L-methionine = N(6),N(6),N(6)-trimethyl-L-lysyl-[protein] + 3 S-adenosyl-L-homocysteine + 3 H(+). In terms of biological role, methylates ribosomal protein L11. The chain is Ribosomal protein L11 methyltransferase from Geotalea uraniireducens (strain Rf4) (Geobacter uraniireducens).